Consider the following 363-residue polypeptide: Aminomethyltransferase (363 aa).

It belongs to the GcvT family. The glycine cleavage system is composed of four proteins: P, T, L and H.

The enzyme catalyses N(6)-[(R)-S(8)-aminomethyldihydrolipoyl]-L-lysyl-[protein] + (6S)-5,6,7,8-tetrahydrofolate = N(6)-[(R)-dihydrolipoyl]-L-lysyl-[protein] + (6R)-5,10-methylene-5,6,7,8-tetrahydrofolate + NH4(+). In terms of biological role, the glycine cleavage system catalyzes the degradation of glycine. The chain is Aminomethyltransferase from Staphylococcus aureus (strain N315).